The primary structure comprises 152 residues: 6,7-dimethyl-8-ribityllumazine synthase (152 aa).

5-amino-6-(D-ribitylamino)uracil contacts are provided by residues Phe21, 55 to 57 (AFE), and 79 to 81 (CVI). (2S)-2-hydroxy-3-oxobutyl phosphate is bound at residue 84 to 85 (ST). His87 acts as the Proton donor in catalysis. 5-amino-6-(D-ribitylamino)uracil is bound at residue Phe112. A (2S)-2-hydroxy-3-oxobutyl phosphate-binding site is contributed by Arg126.

The protein belongs to the DMRL synthase family. As to quaternary structure, forms an icosahedral capsid composed of 60 subunits, arranged as a dodecamer of pentamers.

The catalysed reaction is (2S)-2-hydroxy-3-oxobutyl phosphate + 5-amino-6-(D-ribitylamino)uracil = 6,7-dimethyl-8-(1-D-ribityl)lumazine + phosphate + 2 H2O + H(+). Its pathway is cofactor biosynthesis; riboflavin biosynthesis; riboflavin from 2-hydroxy-3-oxobutyl phosphate and 5-amino-6-(D-ribitylamino)uracil: step 1/2. Functionally, catalyzes the formation of 6,7-dimethyl-8-ribityllumazine by condensation of 5-amino-6-(D-ribitylamino)uracil with 3,4-dihydroxy-2-butanone 4-phosphate. This is the penultimate step in the biosynthesis of riboflavin. The sequence is that of 6,7-dimethyl-8-ribityllumazine synthase from Staphylococcus saprophyticus subsp. saprophyticus (strain ATCC 15305 / DSM 20229 / NCIMB 8711 / NCTC 7292 / S-41).